We begin with the raw amino-acid sequence, 150 residues long: Macrodomain Ter protein (150 aa).

It belongs to the MatP family. In terms of assembly, homodimer.

It is found in the cytoplasm. Functionally, required for spatial organization of the terminus region of the chromosome (Ter macrodomain) during the cell cycle. Prevents early segregation of duplicated Ter macrodomains during cell division. Binds specifically to matS, which is a 13 bp signature motif repeated within the Ter macrodomain. The chain is Macrodomain Ter protein from Salmonella agona (strain SL483).